Here is a 1700-residue protein sequence, read N- to C-terminus: Probable serine/threonine-protein kinase ifkC (1700 aa).

Residues 1-25 are disordered; the sequence is MPPKPKQKAKQPSQQPPPPPPPAAA. Over residues 14 to 23 the composition is skewed to pro residues; it reads QQPPPPPPPA. The RWD domain occupies 74 to 197; that stretch reads MELEALQAIF…EIAKDFLNEN (124 aa). Over residues 454–463 the composition is skewed to polar residues; sequence GLKKSPSTFE. Residues 454–488 form a disordered region; the sequence is GLKKSPSTFEYSGEGGGGGVGGGSSQKTINPHQQS. The span at 466-477 shows a compositional bias: gly residues; sequence GEGGGGGVGGGS. Residues 479-488 show a composition bias toward polar residues; that stretch reads QKTINPHQQS. The Protein kinase domain occupies 494–1027; it reads FEEIQLLGRG…AQQLLQSELM (534 aa). ATP contacts are provided by residues 500-508 and Lys523; that span reads LGRGGFGQV. Disordered stretches follow at residues 568–639 and 689–760; these read LTND…ENND and GNNT…SSSK. The segment covering 572–639 has biased composition (acidic residues); the sequence is NSDDDDDDDD…SEFESEENND (68 aa). A compositionally biased stretch (low complexity) spans 697–735; sequence SSNQHLQQQQQQNQSQQQKKQPQQNQSQQQKKLKNSNSK. The span at 736-752 shows a compositional bias: basic residues; the sequence is SKSKSKSKSKSKSKSNS. Catalysis depends on Asp822, which acts as the Proton acceptor. Composition is skewed to low complexity over residues 850–875, 1135–1158, 1230–1240, and 1509–1531; these read TSTL…SSNS, NNSS…NTNS, SSNGNSNNNNS, and NNSN…SYNN. Disordered stretches follow at residues 850-901, 1134-1160, 1216-1253, and 1507-1531; these read TSTL…EVEG, FNNS…NSVV, KHHH…SNTT, and NLNN…SYNN.

The protein belongs to the protein kinase superfamily. Ser/Thr protein kinase family. GCN2 subfamily.

The catalysed reaction is L-seryl-[protein] + ATP = O-phospho-L-seryl-[protein] + ADP + H(+). It catalyses the reaction L-threonyl-[protein] + ATP = O-phospho-L-threonyl-[protein] + ADP + H(+). This Dictyostelium discoideum (Social amoeba) protein is Probable serine/threonine-protein kinase ifkC (ifkC).